The chain runs to 1456 residues: MDTGEAAFGVASLRLRGSMASASSRRAPSYRDYDVFSIASSSRAEAEDDEEALKWAALEKLPTHARVRKGIVAAADDGQGSGAAGEVVDVAGLGFQERKHLLERLVRVAEEDHESFLLKLKQRIDRVGLDFPTIEVRYEHLSIDALAHVGSRGLPTFLNTTLNSLESLANLLHVVPNKKRPLNILHDVHGVIKPRRMTLLLGPPGSGKTTLLLALAGKLGSDLKVSGKVTYNGYGMDEFVAQRSAAYISQHDLHIPEMTVRETLAFSARCQGVGTRYDMLTELARREKAANIKPDPDLDVYMKAISVGGQETNIITDYVLKILGLDICADTIVGNEMLRGISGGQRKRVTTGEMIVGPARAMFMDEISTGLDSSTTFQIVKSLGQITSILGGTTVISLLQPAPETYNLFDDIILLSDGHIVYQGPREHVLEFFESMGFKCPDRKGVADFLQEVTSRKDQQQYWARTHQPYRYIPVQEFACAFQSFHVGQTLSDELSHPFDKSTSHPASLTTSTYGASKLELLRTCIARELLLMKRNMFVYRFRAFQLLVITIIVMTLFLRTNMHHETRTDGIVYLGALFFAMVAHMFNGFSELAMATIKLPVFFKQRDYLFFPSWAYTIPTWILKIPISCFEVAITVFLSYYVIGFDPNVGRLFKQYLLLLLVNQMAAALFRFIAALGRTMVVANTLASFALLVLLVLSGFILSHHDVKKWWIWGYWISPLQYAMNAIAVNEFLGHKWNRLVQGTNTTLGIEVLKSRGMFTEAKWYWIGVGALFGYVIVFNILFTIALGYLKPSGKAQQILSEEALKEKHANITGETINDPRNSASSGQTTNTRRNAAPGEASENRRGMVLPFAPLAVAFNNIRYSVDMPPEMKAQGVDQDRLLLLKGVSGSFRPGVLTALMGVSGAGKTTLMDVLAGRKTGGYIEGDISISGYPKKQETFARVSGYCEQNDIHSPNVTVYESLAYSAWLRLPSDVDSETRKMFIEQVMELVELNPLRDALVGLPGVNGLSTEQRKRLTIAVELVANPSIIFMDEPTSGLDARAAAIVMRTVRNTVDTGRTVVCTIHQPSIDIFEAFDELFLMKRGGEEIYVGPLGHHSCDLIEYFEGVEGVSKIKPGYNPATWMLEVTTLAQEDVLGISFTDVYKNSDLYQRNQSLIKGISRPPQGSKDLFFPTQFSQSFSTQCMACLWKQNLSYWRNPPYTVVRFFFSLIVALMFGTIFWRLGSKRSRQQDLFNAMGSMYAAVLFMGISYSSSVQPVVAVERTVFYRERAAGMYSALPYAFGQVVVELPYVLVQSAVYGVIVYAMIGFEWEAKKFFWYLYFMYFTLLYFTFYGMLAVGLTPSYNIASIVSSFFYGIWNLFSGFVIPRPSMPVWWRWYSWACPVSWTLYGLVASQFGDLKEPLRDTGVPIDVFLREYFGFKHDFLGVVAVAVAGFATLFAVSFSLSIKMLNFQRR.

An ABC transporter 1 domain is found at 169-442 (ANLLHVVPNK…FESMGFKCPD (274 aa)). Residue 202-209 (GPPGSGKT) coordinates ATP. Residues 520–733 (ELLRTCIARE…AMNAIAVNEF (214 aa)) form the ABC transmembrane type-2 1 domain. A run of 6 helical transmembrane segments spans residues 538–558 (FVYR…MTLF), 571–591 (GIVY…NGFS), 626–646 (IPIS…VIGF), 658–678 (LLLL…AALG), 682–702 (VVAN…SGFI), and 768–788 (IGVG…TIAL). Residues 812–844 (NITGETINDPRNSASSGQTTNTRRNAAPGEASE) are disordered. A compositionally biased stretch (polar residues) spans 814 to 835 (TGETINDPRNSASSGQTTNTRR). In terms of domain architecture, ABC transporter 2 spans 858-1110 (VAFNNIRYSV…DLIEYFEGVE (253 aa)). 903–910 (GVSGAGKT) provides a ligand contact to ATP. The ABC transmembrane type-2 2 domain maps to 1183–1397 (TQCMACLWKQ…TLYGLVASQF (215 aa)). A run of 7 helical transmembrane segments spans residues 1202–1222 (YTVV…TIFW), 1242–1262 (YAAV…VVAV), 1290–1310 (LPYV…MIGF), 1317–1337 (FFWY…YGML), 1347–1367 (IASI…GFVI), 1378–1398 (WYSW…SQFG), and 1425–1445 (FLGV…VSFS).

It belongs to the ABC transporter superfamily. ABCG family. PDR (TC 3.A.1.205) subfamily.

It is found in the membrane. In terms of biological role, may be a general defense protein. This Oryza sativa subsp. japonica (Rice) protein is ABC transporter G family member 44.